We begin with the raw amino-acid sequence, 65 residues long: Small ribosomal subunit protein bS21 (65 aa).

Residues 45-65 (GRLKRSRSRRRAQRANEERNS) are disordered. Residues 48 to 57 (KRSRSRRRAQ) show a composition bias toward basic residues.

It belongs to the bacterial ribosomal protein bS21 family.

The chain is Small ribosomal subunit protein bS21 from Chlorobium phaeobacteroides (strain DSM 266 / SMG 266 / 2430).